A 22-amino-acid chain; its full sequence is Bacteriocin serracin-P 23 kDa subunit (22 aa).

Its function is as follows. Major component of a prophage tail tube. In terms of biological role, antibacterial activity against Gram-negative bacterium E.amylovora. In Serratia plymuthica, this protein is Bacteriocin serracin-P 23 kDa subunit.